Consider the following 153-residue polypeptide: Endoribonuclease YbeY (153 aa).

Positions 113, 117, and 123 each coordinate Zn(2+).

This sequence belongs to the endoribonuclease YbeY family. It depends on Zn(2+) as a cofactor.

The protein localises to the cytoplasm. Functionally, single strand-specific metallo-endoribonuclease involved in late-stage 70S ribosome quality control and in maturation of the 3' terminus of the 16S rRNA. In Aliivibrio salmonicida (strain LFI1238) (Vibrio salmonicida (strain LFI1238)), this protein is Endoribonuclease YbeY.